The primary structure comprises 318 residues: tRNA(Ile)-lysidine synthase (318 aa).

26-31 serves as a coordination point for ATP; that stretch reads SGGADS.

It belongs to the tRNA(Ile)-lysidine synthase family.

The protein localises to the cytoplasm. It carries out the reaction cytidine(34) in tRNA(Ile2) + L-lysine + ATP = lysidine(34) in tRNA(Ile2) + AMP + diphosphate + H(+). Ligates lysine onto the cytidine present at position 34 of the AUA codon-specific tRNA(Ile) that contains the anticodon CAU, in an ATP-dependent manner. Cytidine is converted to lysidine, thus changing the amino acid specificity of the tRNA from methionine to isoleucine. This Nocardia farcinica (strain IFM 10152) protein is tRNA(Ile)-lysidine synthase.